The sequence spans 776 residues: ADP-ribosylation factor GTPase-activating protein AGD2 (776 aa).

The BAR domain maps to 2-226 (AGFINLEDSP…IHQVLTYAQQ (225 aa)). Residues 248–267 (QSELDSQQASAKADPSDVGG) are disordered. The region spanning 290-421 (EVTKQGYLLK…WVNKITAAIT (132 aa)) is the PH domain. The region spanning 467–604 (DDVLTILREI…ALVVKDEREA (138 aa)) is the Arf-GAP domain. A C4-type zinc finger spans residues 482–505 (CAECNAPDPDWASLNLGVLMCIEC). ANK repeat units lie at residues 683–712 (QGCSLLHVACQSGDPILLELLLQFGADINM) and 716–745 (HGRTPLHHCIASGNNAFAKVLLRRGARPSI).

In terms of tissue distribution, expressed in roots, hypocotyls, cotyledons, leaf and shoot apical meristems and siliques.

In terms of biological role, probable GTPase-activating protein. The sequence is that of ADP-ribosylation factor GTPase-activating protein AGD2 (AGD2) from Arabidopsis thaliana (Mouse-ear cress).